A 107-amino-acid polypeptide reads, in one-letter code: MMRGNIAQLMQQAQKMQENLQRAQEELAKLEVTGSAGGGMVSVILSGTKECRKVRIDPSILNDQEMIEDLIAAAFNDASNKVDTESKERMGSATLGMSLPPGFKLPF.

This sequence belongs to the YbaB/EbfC family. Homodimer.

It localises to the cytoplasm. It is found in the nucleoid. In terms of biological role, binds to DNA and alters its conformation. May be involved in regulation of gene expression, nucleoid organization and DNA protection. This chain is Nucleoid-associated protein XF_1808, found in Xylella fastidiosa (strain 9a5c).